A 229-amino-acid chain; its full sequence is Cytidylate kinase (229 aa).

Residue 12-20 (GPSGAGKGT) coordinates ATP.

This sequence belongs to the cytidylate kinase family. Type 1 subfamily.

Its subcellular location is the cytoplasm. The catalysed reaction is CMP + ATP = CDP + ADP. It carries out the reaction dCMP + ATP = dCDP + ADP. This Pseudomonas aeruginosa (strain LESB58) protein is Cytidylate kinase.